The chain runs to 238 residues: Probable transcriptional regulatory protein SpyM51586 (238 aa).

Belongs to the TACO1 family. YeeN subfamily.

The protein localises to the cytoplasm. The protein is Probable transcriptional regulatory protein SpyM51586 of Streptococcus pyogenes serotype M5 (strain Manfredo).